The primary structure comprises 796 residues: MDGIISNGSPGAPVTQPPPEPLERPPTPPPPPPEDSAAPPPPPDTSVPPPPPEDAPPAPPPEKKKKVGWGAKRPAATPLSVEELVRKKREADAAAAKPKFLSKAERERIALEKRAKEVEAGRRLKLDPFTDGTDRSGTQSPSVYPETPNGDERSIPTGPRAMRNSEVPTGPAAMRNKTYDMSPPPPPKAMSFSLTDGKGDSKRQAEEDEAAAQAALIKQKYMGTEKTSSFSAKKKRKRTTDRKFNFEWNAEEDTSGDYNPLYQQRHEANFYGRGRLAGFGDDVADTLAQKYARALEDRDREAGSIRAREILEMERRRREESTRNQLDKHWSEKKLEHMRERDWRIFKEDFNISTKGGSVPNPMRSWEESGLPKRLLELVDQVGYKEPTPIQRAAIPIALQSRDLIGVAVTGSGKTASFLLPLLVYISELPRIDEFEWRKNDGPYAIVLAPTRELAQQIEIEARKFTQPLGFNVVSIVGGHSFEEQAYSLRNGAEIIIATPGRLVDCIERRLLVLSQCCYVIMDEADRMIDLGFEEPVNKILDALPVTNEKPDTEEAENSAAMRSHRYRQTMMYTATMPSAVERIARKYLRRPAIVTIGSAGEAVDTVEQRVEMIAGEDKRKKRLADILSSGEFRPPIIVFVNIKRNCDAIAREIKQMGFSSVTLHGSKTQEQREAALASVRNGSTDVLVATDLAGRGIDVPDVSLVVNFNMANSIESYTHRIGRTGRAGKSGVAITFLGNEDADVMYDLKQMLMKSPISRVPEELRKHEAAQSKPNRGLAKKSDDSSGFGTKSGWQ.

2 disordered regions span residues 1–81 (MDGI…PLSV) and 113–211 (KRAK…DEAA). Residues 15 to 60 (TQPPPEPLERPPTPPPPPPEDSAAPPPPPDTSVPPPPPEDAPPAPP) are compositionally biased toward pro residues. Residues 113 to 134 (KRAKEVEAGRRLKLDPFTDGTD) show a composition bias toward basic and acidic residues. The Q motif motif lies at 364–392 (RSWEESGLPKRLLELVDQVGYKEPTPIQR). The Helicase ATP-binding domain maps to 395–595 (IPIALQSRDL…RKYLRRPAIV (201 aa)). Residue 408–415 (AVTGSGKT) participates in ATP binding. The short motif at 523–526 (DEAD) is the DEAD box element. Residues 606–769 (TVEQRVEMIA…RVPEELRKHE (164 aa)) enclose the Helicase C-terminal domain. A disordered region spans residues 760–796 (RVPEELRKHEAAQSKPNRGLAKKSDDSSGFGTKSGWQ). The span at 761–771 (VPEELRKHEAA) shows a compositional bias: basic and acidic residues. Residues 786 to 796 (SSGFGTKSGWQ) show a composition bias toward polar residues.

The protein belongs to the DEAD box helicase family. DDX23/PRP28 subfamily. Component of the U5 snRNP complex.

Its subcellular location is the cytoplasm. It localises to the nucleus. The catalysed reaction is ATP + H2O = ADP + phosphate + H(+). Its function is as follows. ATP-dependent RNA helicase involved in mRNA splicing. May destabilize the U1/5'-splice site duplex to permit an effective competition for the 5'-splice site by the U6 snRNA, resulting in the switch between U1 and U6 at the 5'-splice site. May also act to unwind the U4/U6 base-pairing interaction in the U4/U6/U5 snRNP, facilitating the first covalent step of splicing. In Aspergillus fumigatus (strain ATCC MYA-4609 / CBS 101355 / FGSC A1100 / Af293) (Neosartorya fumigata), this protein is Pre-mRNA-splicing ATP-dependent RNA helicase prp28 (prp28).